Consider the following 125-residue polypeptide: Large ribosomal subunit protein bL12 (125 aa).

The protein belongs to the bacterial ribosomal protein bL12 family. In terms of assembly, homodimer. Part of the ribosomal stalk of the 50S ribosomal subunit. Forms a multimeric L10(L12)X complex, where L10 forms an elongated spine to which 2 to 4 L12 dimers bind in a sequential fashion. Binds GTP-bound translation factors.

In terms of biological role, forms part of the ribosomal stalk which helps the ribosome interact with GTP-bound translation factors. Is thus essential for accurate translation. The polypeptide is Large ribosomal subunit protein bL12 (Alkalilimnicola ehrlichii (strain ATCC BAA-1101 / DSM 17681 / MLHE-1)).